We begin with the raw amino-acid sequence, 716 residues long: Zinc finger protein on ecdysone puffs (716 aa).

Disordered stretches follow at residues 103–168 (PSLL…GGIR) and 182–208 (KNANQNKKKEPTPGEKKIESPTKESPY). The segment covering 188–203 (KKKEPTPGEKKIESPT) has biased composition (basic and acidic residues). Ser-201 is modified (phosphoserine). Thr-203 bears the Phosphothreonine mark. Ser-206 carries the phosphoserine modification. The segment at 216–240 (FYCHLCKKHMWDANSFENHIKGRTH) adopts a C2H2-type 1 zinc-finger fold. A C2H2-type 2; atypical zinc finger spans residues 288-310 (DYCTMCDLNFHGHISTHRKSEGH). The C2H2-type 3 zinc finger occupies 319–343 (PKCIECNKEFATRIDYDTHLLSAEH). The segment covering 350–359 (NNTKVGERKR) has biased composition (basic and acidic residues). Residues 350–447 (NNTKVGERKR…EEEEVALPVD (98 aa)) form a disordered region. A Nuclear localization signal motif is present at residues 379–383 (KRKKK). Residues 386-401 (KKEGEAADGEAKKEGA) show a composition bias toward basic and acidic residues. Over residues 405-414 (EGAEGDEAEG) the composition is skewed to acidic residues. Positions 415–431 (EEAKEGEEAADETKEGD) are enriched in basic and acidic residues. Residues 432-447 (ELNESQEEEEVALPVD) show a composition bias toward acidic residues. The C2H2-type 4 zinc-finger motif lies at 489–513 (YECSVCSKFFDTEVTAEIHSRTATH). Residues 534-716 (RAAAALEENE…QRARGRYNRY (183 aa)) are disordered. Positions 541–551 (ENERKKRKVEE) are enriched in basic and acidic residues. Positions 544 to 548 (RKKRK) match the Nuclear localization signal motif. A compositionally biased stretch (acidic residues) spans 560–638 (AAEETTEGAE…GQEGEQEPEP (79 aa)). Positions 639–656 (EPAPVQTPAPAEPAPPAK) are enriched in pro residues. Residues 657 to 704 (TPAKTPTKAAAPAAVASPAAAATSADASPSPAKKATPARAAAGAKATP) show a composition bias toward low complexity. Ser-673, Ser-684, and Ser-686 each carry phosphoserine. Phosphothreonine is present on Thr-692. Positions 707-716 (QRARGRYNRY) are enriched in basic residues.

The protein resides in the nucleus. The protein localises to the chromosome. Functionally, may play a role in the process of early and late gene activation, or possibly in RNA processing, for a defined set of developmentally regulated loci. In Drosophila melanogaster (Fruit fly), this protein is Zinc finger protein on ecdysone puffs (Pep).